The primary structure comprises 336 residues: Mitochondrial thiamine pyrophosphate carrier 1 (336 aa).

3 Solcar repeats span residues 11–98 (ISST…VNQV), 112–202 (SSGA…VKDS), and 221–323 (TKGW…SLSI). The next 6 membrane-spanning stretches (helical) occupy residues 17–37 (MLCG…LDVV), 66–86 (GVTA…FYGA), 118–138 (FIAG…FDLF), 177–197 (GVSS…ASYG), 228–244 (TAGL…VFPL), and 298–315 (GFLV…ITMY).

This sequence belongs to the mitochondrial carrier (TC 2.A.29) family.

The protein resides in the mitochondrion inner membrane. In terms of biological role, mitochondrial transporter that mediates uptake of thiamine pyrophosphate (ThPP) into mitochondria. In Yarrowia lipolytica (strain CLIB 122 / E 150) (Yeast), this protein is Mitochondrial thiamine pyrophosphate carrier 1 (TPC1).